A 478-amino-acid chain; its full sequence is tRNA (guanine-N(7)-)-methyltransferase non-catalytic subunit TRM82 (478 aa).

WD repeat units follow at residues 14 to 53 (SSADGAAWTLFGASGSKIVVQSSNGVASVWSRQAVQVLDP), 73 to 113 (EQKF…GLQQ), 217 to 258 (GHVS…HIIE), and 263 to 301 (GHEEFVSRLCVTRSGLLVSGGGDAHLLVWDWRNFLLNEK).

This sequence belongs to the WD repeat TRM82 family. As to quaternary structure, forms a heterodimer with the catalytic subunit TRM8.

It is found in the nucleus. The protein operates within tRNA modification; N(7)-methylguanine-tRNA biosynthesis. Functionally, required for the formation of N(7)-methylguanine at position 46 (m7G46) in tRNA. In the complex, it is required to stabilize and induce conformational changes of the catalytic subunit. The protein is tRNA (guanine-N(7)-)-methyltransferase non-catalytic subunit TRM82 of Phaeosphaeria nodorum (strain SN15 / ATCC MYA-4574 / FGSC 10173) (Glume blotch fungus).